A 440-amino-acid chain; its full sequence is tRNA modification GTPase MnmE (440 aa).

Residues arginine 22, glutamate 79, and lysine 118 each contribute to the (6S)-5-formyl-5,6,7,8-tetrahydrofolate site. One can recognise a TrmE-type G domain in the interval 214 to 366 (GLIFTILGKP…LKTMLEAEAR (153 aa)). GTP-binding positions include 224–229 (NAGKSS), 243–249 (SSQPGTT), and 268–271 (DTAG). The Mg(2+) site is built by serine 228 and threonine 249. Lysine 440 is a (6S)-5-formyl-5,6,7,8-tetrahydrofolate binding site.

Belongs to the TRAFAC class TrmE-Era-EngA-EngB-Septin-like GTPase superfamily. TrmE GTPase family. As to quaternary structure, homodimer. Heterotetramer of two MnmE and two MnmG subunits. It depends on K(+) as a cofactor.

The protein localises to the cytoplasm. Exhibits a very high intrinsic GTPase hydrolysis rate. Involved in the addition of a carboxymethylaminomethyl (cmnm) group at the wobble position (U34) of certain tRNAs, forming tRNA-cmnm(5)s(2)U34. The protein is tRNA modification GTPase MnmE of Granulibacter bethesdensis (strain ATCC BAA-1260 / CGDNIH1).